The sequence spans 24 residues: Grammistin Gs G (24 aa).

It belongs to the grammistin family. Group 1 subfamily. As to quaternary structure, exists as aggregates of 3-4 molecules. In terms of tissue distribution, expressed by the skin glands.

It localises to the secreted. Thanks to its abundant amphiphilic alpha-helices, it may integrate into membrane phospholipids, leading to lysis of the membrane. Its high hemolytic activity is inhibited by phospholipids, but not by cholesterol. Has antibacterial activity with a broad spectrum against various species of bacteria including both Gram-positive and Gram-negative groups. Also has high ichthyotoxic activity. The sequence is that of Grammistin Gs G from Grammistes sexlineatus (Goldenstriped soapfish).